The chain runs to 169 residues: SsrA-binding protein (169 aa).

This sequence belongs to the SmpB family.

The protein localises to the cytoplasm. In terms of biological role, required for rescue of stalled ribosomes mediated by trans-translation. Binds to transfer-messenger RNA (tmRNA), required for stable association of tmRNA with ribosomes. tmRNA and SmpB together mimic tRNA shape, replacing the anticodon stem-loop with SmpB. tmRNA is encoded by the ssrA gene; the 2 termini fold to resemble tRNA(Ala) and it encodes a 'tag peptide', a short internal open reading frame. During trans-translation Ala-aminoacylated tmRNA acts like a tRNA, entering the A-site of stalled ribosomes, displacing the stalled mRNA. The ribosome then switches to translate the ORF on the tmRNA; the nascent peptide is terminated with the 'tag peptide' encoded by the tmRNA and targeted for degradation. The ribosome is freed to recommence translation, which seems to be the essential function of trans-translation. The sequence is that of SsrA-binding protein from Mycolicibacterium paratuberculosis (strain ATCC BAA-968 / K-10) (Mycobacterium paratuberculosis).